The chain runs to 489 residues: Lysine--tRNA ligase (489 aa).

Mg(2+)-binding residues include glutamate 398 and glutamate 405.

It belongs to the class-II aminoacyl-tRNA synthetase family. As to quaternary structure, homodimer. Requires Mg(2+) as cofactor.

Its subcellular location is the cytoplasm. The catalysed reaction is tRNA(Lys) + L-lysine + ATP = L-lysyl-tRNA(Lys) + AMP + diphosphate. This Moorella thermoacetica (strain ATCC 39073 / JCM 9320) protein is Lysine--tRNA ligase.